The following is a 366-amino-acid chain: S-adenosylmethionine:tRNA ribosyltransferase-isomerase (366 aa).

The protein belongs to the QueA family. As to quaternary structure, monomer.

Its subcellular location is the cytoplasm. The catalysed reaction is 7-aminomethyl-7-carbaguanosine(34) in tRNA + S-adenosyl-L-methionine = epoxyqueuosine(34) in tRNA + adenine + L-methionine + 2 H(+). Its pathway is tRNA modification; tRNA-queuosine biosynthesis. Its function is as follows. Transfers and isomerizes the ribose moiety from AdoMet to the 7-aminomethyl group of 7-deazaguanine (preQ1-tRNA) to give epoxyqueuosine (oQ-tRNA). This chain is S-adenosylmethionine:tRNA ribosyltransferase-isomerase, found in Bradyrhizobium diazoefficiens (strain JCM 10833 / BCRC 13528 / IAM 13628 / NBRC 14792 / USDA 110).